A 266-amino-acid polypeptide reads, in one-letter code: Undecaprenyl-diphosphatase (266 aa).

The next 7 membrane-spanning stretches (helical) occupy residues 8–28 (VLAL…AHLI), 39–59 (QGLA…VIYF), 87–107 (WAVG…HDII), 113–133 (SAQV…FADV), 188–208 (SFLL…LGLV), 219–239 (MIVL…HYFL), and 246–266 (TMLP…FLFW).

The protein belongs to the UppP family.

It localises to the cell inner membrane. The enzyme catalyses di-trans,octa-cis-undecaprenyl diphosphate + H2O = di-trans,octa-cis-undecaprenyl phosphate + phosphate + H(+). In terms of biological role, catalyzes the dephosphorylation of undecaprenyl diphosphate (UPP). Confers resistance to bacitracin. The chain is Undecaprenyl-diphosphatase from Thioalkalivibrio sulfidiphilus (strain HL-EbGR7).